We begin with the raw amino-acid sequence, 62 residues long: Large ribosomal subunit protein bL28 (62 aa).

Residues 1 to 27 are disordered; that stretch reads MARKCVVTGRQTRSGNQRSHAMNSNKR. The span at 9–26 shows a compositional bias: polar residues; sequence GRQTRSGNQRSHAMNSNK.

The protein belongs to the bacterial ribosomal protein bL28 family.

The sequence is that of Large ribosomal subunit protein bL28 from Oceanobacillus iheyensis (strain DSM 14371 / CIP 107618 / JCM 11309 / KCTC 3954 / HTE831).